Consider the following 303-residue polypeptide: UDP-3-O-acyl-N-acetylglucosamine deacetylase (303 aa).

Histidine 78, histidine 237, and aspartate 241 together coordinate Zn(2+). Histidine 264 (proton donor) is an active-site residue.

The protein belongs to the LpxC family. It depends on Zn(2+) as a cofactor.

The catalysed reaction is a UDP-3-O-[(3R)-3-hydroxyacyl]-N-acetyl-alpha-D-glucosamine + H2O = a UDP-3-O-[(3R)-3-hydroxyacyl]-alpha-D-glucosamine + acetate. It participates in glycolipid biosynthesis; lipid IV(A) biosynthesis; lipid IV(A) from (3R)-3-hydroxytetradecanoyl-[acyl-carrier-protein] and UDP-N-acetyl-alpha-D-glucosamine: step 2/6. Its function is as follows. Catalyzes the hydrolysis of UDP-3-O-myristoyl-N-acetylglucosamine to form UDP-3-O-myristoylglucosamine and acetate, the committed step in lipid A biosynthesis. This chain is UDP-3-O-acyl-N-acetylglucosamine deacetylase, found in Pseudomonas fluorescens (strain SBW25).